The chain runs to 428 residues: Adenylosuccinate synthetase (428 aa).

GTP is bound by residues 12–18 (GDEGKGK) and 40–42 (GHT). Catalysis depends on Asp13, which acts as the Proton acceptor. Residues Asp13 and Gly40 each coordinate Mg(2+). IMP-binding positions include 13–16 (DEGK), 38–41 (NAGH), Thr129, Arg143, Gln224, Thr239, and Arg303. The active-site Proton donor is His41. Residue 299–305 (VTTGRIR) coordinates substrate. GTP contacts are provided by residues Arg305, 331 to 333 (KVD), and 410 to 412 (AYG).

Belongs to the adenylosuccinate synthetase family. In terms of assembly, homodimer. Requires Mg(2+) as cofactor.

The protein resides in the cytoplasm. The enzyme catalyses IMP + L-aspartate + GTP = N(6)-(1,2-dicarboxyethyl)-AMP + GDP + phosphate + 2 H(+). It functions in the pathway purine metabolism; AMP biosynthesis via de novo pathway; AMP from IMP: step 1/2. Plays an important role in the de novo pathway of purine nucleotide biosynthesis. Catalyzes the first committed step in the biosynthesis of AMP from IMP. In Francisella tularensis subsp. mediasiatica (strain FSC147), this protein is Adenylosuccinate synthetase.